The sequence spans 1204 residues: Integrator complex subunit 2 (1204 aa).

Residues 428–444 traverse the membrane as a helical segment; sequence FVSLSFCMLLAFSTLVS.

Belongs to the Integrator subunit 2 family. Component of the Integrator complex, composed of core subunits INTS1, INTS2, INTS3, INTS4, INTS5, INTS6, INTS7, INTS8, INTS9/RC74, INTS10, INTS11/CPSF3L, INTS12, INTS13, INTS14 and INTS15. The core complex associates with protein phosphatase 2A subunits PPP2CA and PPP2R1A, to form the Integrator-PP2A (INTAC) complex.

It localises to the nucleus. The protein localises to the nucleus membrane. It is found in the cytoplasm. Its function is as follows. Component of the integrator complex, a multiprotein complex that terminates RNA polymerase II (Pol II) transcription in the promoter-proximal region of genes. The integrator complex provides a quality checkpoint during transcription elongation by driving premature transcription termination of transcripts that are unfavorably configured for transcriptional elongation: the complex terminates transcription by (1) catalyzing dephosphorylation of the C-terminal domain (CTD) of Pol II subunit POLR2A/RPB1 and SUPT5H/SPT5, (2) degrading the exiting nascent RNA transcript via endonuclease activity and (3) promoting the release of Pol II from bound DNA. The integrator complex is also involved in terminating the synthesis of non-coding Pol II transcripts, such as enhancer RNAs (eRNAs), small nuclear RNAs (snRNAs), telomerase RNAs and long non-coding RNAs (lncRNAs). Mediates recruitment of cytoplasmic dynein to the nuclear envelope, probably as component of the integrator complex. This is Integrator complex subunit 2 from Homo sapiens (Human).